Consider the following 608-residue polypeptide: Albumin 2 (608 aa).

The N-terminal stretch at 1–14 (MQWLSVCSLLVLLS) is a signal peptide. The propeptide occupies 15-18 (VLSR). 3 Albumin domains span residues 19–205 (SQAQ…TFQH), 206–398 (AIAK…AGSD), and 402–600 (KITD…KLVS). Intrachain disulfides connect Cys-26-Cys-72, Cys-71-Cys-80, Cys-93-Cys-108, Cys-107-Cys-118, Cys-142-Cys-187, Cys-186-Cys-195, Cys-218-Cys-264, Cys-263-Cys-271, Cys-283-Cys-299, Cys-298-Cys-309, Cys-336-Cys-381, Cys-380-Cys-389, Cys-414-Cys-460, Cys-459-Cys-471, Cys-484-Cys-500, Cys-499-Cys-510, Cys-537-Cys-582, and Cys-581-Cys-590. N-linked (GlcNAc...) asparagine glycosylation is present at Asn-501.

It belongs to the ALB/AFP/VDB family. In terms of tissue distribution, plasma.

It is found in the secreted. Its function is as follows. Binds water, Ca(2+), Na(+), K(+), fatty acids, hormones, bilirubin and drugs. Its main function is the regulation of the colloidal osmotic pressure of blood. This chain is Albumin 2 (alb2), found in Salmo salar (Atlantic salmon).